We begin with the raw amino-acid sequence, 307 residues long: Agmatinase (307 aa).

The Mn(2+) site is built by His-128, Asp-151, His-153, Asp-155, Asp-232, and Asp-234.

The protein belongs to the arginase family. Agmatinase subfamily. Mn(2+) is required as a cofactor.

It catalyses the reaction agmatine + H2O = urea + putrescine. It participates in amine and polyamine biosynthesis; putrescine biosynthesis via agmatine pathway; putrescine from agmatine: step 1/1. Catalyzes the formation of putrescine from agmatine. This is Agmatinase from Neisseria meningitidis serogroup A / serotype 4A (strain DSM 15465 / Z2491).